The following is a 541-amino-acid chain: MFQDKGWILVTLITLVTPSWAAYKLQERYSWNQLDFAFPNTRLKDQALASGDYIPQNALPVGVEHFGNRLFVTVPRWRDGIPATLTYINMDRSLTGSPELIPYPDWRSNTAGDCANSITTAYRIKVDECGRLWVLDTGTVGIGNTTTNPCPYAVNVFDLTTDTRIRRYELPGVDTNPNTFIANIAVDIGKNCDDAYAYFADELGYGLIAYSWELNKSWRFSAHSYFFPDPLRGDFNVAGINFQWGEEGIFGMSLSPIRSDGYRTLYFSPLASHRQFAVSTRILRDETRTEDSYHDFVALDERGPNSHTTSRVMSDDGIELFNLIDQNAVGCWHSSMPYSPQFHGIVDRDDVGLVFPADVKIDENKNVWVLSDRMPVFLLSDLDYSDTNFRIYTAPLATLIENTVCDLRNNAYGPPNTVSIPKQAVLPMGPPLYTKQYRPLLPQKPQTSWASSPPPPSRTYLPANSGNVVSSISVSTNSVGPAGVEVPKAYIFNQHNGINYETSGPHLFPTHQPAQPGVQDGGLKTYVNARQSGWWHHQHQG.

The first 21 residues, 1 to 21, serve as a signal peptide directing secretion; it reads MFQDKGWILVTLITLVTPSWA. N-linked (GlcNAc...) asparagine glycans are attached at residues N144 and N215. The tract at residues 443–463 is disordered; the sequence is QKPQTSWASSPPPPSRTYLPA.

Belongs to the major royal jelly protein family.

The protein localises to the secreted. Functionally, controls the pigmentation pattern of the adult cuticle and larval mouth parts. This is Protein yellow (y) from Drosophila mauritiana (Fruit fly).